Consider the following 291-residue polypeptide: Membrane protein insertase YidC (291 aa).

A signal peptide spans 1 to 19; the sequence is MKKKALLPLLLGVMVFLAG. The N-palmitoyl cysteine moiety is linked to residue Cys20. The S-diacylglycerol cysteine moiety is linked to residue Cys20. The next 4 membrane-spanning stretches (helical) occupy residues 56-76, 134-154, 170-190, and 211-231; these read YGIAIIVLVLVIRIILLPFML, ALGCLPVLIQMPVVMGLYFVL, WFNLIHPDIWITIIAGVLYFI, and MIVSPIMIIWISLSSASALGL. Residues 266-291 are disordered; the sequence is FKENNSNSNKKGKNTQVVSKNNKKKK.

The protein belongs to the OXA1/ALB3/YidC family. Type 2 subfamily.

The protein localises to the cell membrane. Required for the insertion and/or proper folding and/or complex formation of integral membrane proteins into the membrane. Involved in integration of membrane proteins that insert both dependently and independently of the Sec translocase complex, as well as at least some lipoproteins. In Staphylococcus haemolyticus (strain JCSC1435), this protein is Membrane protein insertase YidC.